A 153-amino-acid polypeptide reads, in one-letter code: Aspartate carbamoyltransferase regulatory chain (153 aa).

Zn(2+)-binding residues include Cys-109, Cys-114, Cys-138, and Cys-141.

The protein belongs to the PyrI family. As to quaternary structure, contains catalytic and regulatory chains. Requires Zn(2+) as cofactor.

In terms of biological role, involved in allosteric regulation of aspartate carbamoyltransferase. The chain is Aspartate carbamoyltransferase regulatory chain from Enterobacter sp. (strain 638).